A 514-amino-acid chain; its full sequence is ATP synthase subunit alpha (514 aa).

Residue 170–177 (GDRQIGKT) coordinates ATP.

It belongs to the ATPase alpha/beta chains family. F-type ATPases have 2 components, CF(1) - the catalytic core - and CF(0) - the membrane proton channel. CF(1) has five subunits: alpha(3), beta(3), gamma(1), delta(1), epsilon(1). CF(0) has three main subunits: a(1), b(2) and c(9-12). The alpha and beta chains form an alternating ring which encloses part of the gamma chain. CF(1) is attached to CF(0) by a central stalk formed by the gamma and epsilon chains, while a peripheral stalk is formed by the delta and b chains.

It localises to the cell inner membrane. The catalysed reaction is ATP + H2O + 4 H(+)(in) = ADP + phosphate + 5 H(+)(out). Produces ATP from ADP in the presence of a proton gradient across the membrane. The alpha chain is a regulatory subunit. This chain is ATP synthase subunit alpha, found in Pseudomonas syringae pv. tomato (strain ATCC BAA-871 / DC3000).